A 241-amino-acid polypeptide reads, in one-letter code: Triosephosphate isomerase (241 aa).

9–11 serves as a coordination point for substrate; it reads NWK. Residue H96 is the Electrophile of the active site. E165 acts as the Proton acceptor in catalysis. Substrate contacts are provided by residues G171, S204, and 225-226; that span reads GG.

This sequence belongs to the triosephosphate isomerase family. As to quaternary structure, homodimer.

Its subcellular location is the cytoplasm. It catalyses the reaction D-glyceraldehyde 3-phosphate = dihydroxyacetone phosphate. The protein operates within carbohydrate biosynthesis; gluconeogenesis. Its pathway is carbohydrate degradation; glycolysis; D-glyceraldehyde 3-phosphate from glycerone phosphate: step 1/1. Its function is as follows. Involved in the gluconeogenesis. Catalyzes stereospecifically the conversion of dihydroxyacetone phosphate (DHAP) to D-glyceraldehyde-3-phosphate (G3P). The protein is Triosephosphate isomerase of Trichormus variabilis (strain ATCC 29413 / PCC 7937) (Anabaena variabilis).